We begin with the raw amino-acid sequence, 700 residues long: ABC transporter B family member 26, chloroplastic (700 aa).

The transit peptide at 1-59 (MAQQVLGCTSRPIRVSLHRCSVITTSDTIRRKNLRFVRNPRLSFSLQSSTRNYRLPSIN) directs the protein to the chloroplast. Helical transmembrane passes span 137 to 157 (WVIF…ITIP), 182 to 202 (LVTL…FFGI), and 268 to 288 (LIYL…ICCI). In terms of domain architecture, ABC transmembrane type-1 spans 139–421 (IFAAFSTLIV…VGDNLSSLMQ (283 aa)). Residues 455–694 (IEFVDVSFSY…DGLYARLTKR (240 aa)) enclose the ABC transporter domain. Position 490 to 497 (490 to 497 (GLSGSGKS)) interacts with ATP.

This sequence belongs to the ABC transporter superfamily. ABCB family. Multidrug resistance exporter (TC 3.A.1.201) subfamily.

The protein resides in the plastid. Its subcellular location is the chloroplast membrane. This Arabidopsis thaliana (Mouse-ear cress) protein is ABC transporter B family member 26, chloroplastic (ABCB26).